The following is a 364-amino-acid chain: Probable tartrate dehydrogenase/decarboxylase TtuC (364 aa).

The Mn(2+) site is built by aspartate 222, aspartate 246, and aspartate 250.

This sequence belongs to the isocitrate and isopropylmalate dehydrogenases family. Requires Mg(2+) as cofactor. The cofactor is Mn(2+). It depends on K(+) as a cofactor.

It localises to the cytoplasm. The enzyme catalyses tartrate + NAD(+) = 2-hydroxy-3-oxosuccinate + NADH + H(+). It catalyses the reaction (2R,3S)-tartrate + NAD(+) = 2-hydroxy-3-oxosuccinate + NADH + H(+). The catalysed reaction is (2R,3R)-tartrate + NAD(+) = 2-hydroxy-3-oxosuccinate + NADH + H(+). It carries out the reaction (2R,3R)-tartrate + H(+) = (R)-glycerate + CO2. The enzyme catalyses (R)-malate + NAD(+) = pyruvate + CO2 + NADH. It functions in the pathway carbohydrate acid metabolism; tartrate degradation; 2-hydroxy-3-oxosuccinate from L-tartrate: step 1/1. The protein operates within carbohydrate acid metabolism; tartrate degradation; 2-hydroxy-3-oxosuccinate from meso-tartrate: step 1/1. Its pathway is carbohydrate acid metabolism; tartrate degradation; D-glycerate from L-tartrate: step 1/1. Functionally, has multiple catalytic activities. Apart from catalyzing the oxidation of (+)-tartrate to oxaloglycolate, also converts meso-tartrate to D-glycerate and catalyzes the oxidative decarboxylation of D-malate to pyruvate. The chain is Probable tartrate dehydrogenase/decarboxylase TtuC (ttuC) from Agrobacterium vitis (Rhizobium vitis).